The chain runs to 546 residues: MTTEKRQILVTAALPYANGPIHLGHMVEHIQADIWVRFQRLKGNDCLFICGEDAHGTAIMITAQKQGLPPEALVAKMHKEHARDLGGFLIEYDNFYTTHSPENRELAELIYTRLKDKGDIFAKTISQAYDPVKEIFLPDRFIRGTCPRCGAKDQYGDVCEVCGATYSPTELIDPVSALSGAKPIEKNSEHFFFSLNRYTQLLKKWIDAGHLQPQVANKLKEWFSEDLKPWDISRDAPYFGFEIPHAANKYFYVWLDAPIGYMASLKNLSKQRPSVNFDAYWKEGSQTELYHFVGKDIVYFHALFWPAMLSGAGFRLPTTIYVHGYLTVNGQKMSKSRGTFITAHHYLDHLSPEYLRYYYAAKLSAQVEDIDLNLDDFIQRVNADLIGKYVNLASRCAGFITKNFGGKLANELPEPDLYESFLQTEQTITDYYESLNYSKAVRVIMSLADRANQYIDAKKPWALAKEINQEAQVQAVCTQGLNLFKILTTYLKPILPVTAKKVEQFLNCDELNFANLKTPLLDHSVNPFEPLMQRLLPETAAQLTHE.

Residues 15–25 (PYANGPIHLGH) carry the 'HIGH' region motif. Zn(2+) is bound by residues C146, C149, C159, and C162. The 'KMSKS' region motif lies at 332–336 (KMSKS). K335 provides a ligand contact to ATP.

The protein belongs to the class-I aminoacyl-tRNA synthetase family. MetG type 1 subfamily. Monomer. Zn(2+) serves as cofactor.

The protein resides in the cytoplasm. It catalyses the reaction tRNA(Met) + L-methionine + ATP = L-methionyl-tRNA(Met) + AMP + diphosphate. Functionally, is required not only for elongation of protein synthesis but also for the initiation of all mRNA translation through initiator tRNA(fMet) aminoacylation. This chain is Methionine--tRNA ligase, found in Coxiella burnetii (strain RSA 331 / Henzerling II).